The following is a 114-amino-acid chain: NADH dehydrogenase [ubiquinone] 1 subunit C2, isoform 2 (114 aa).

The chain crosses the membrane as a helical span at residues 56–75 (GLHRQLLYITAFFFAGYYLV).

This sequence belongs to the complex I NDUFC2 subunit family. Complex I is composed of 45 different subunits.

The protein localises to the mitochondrion inner membrane. Its function is as follows. Accessory subunit of the mitochondrial membrane respiratory chain NADH dehydrogenase (Complex I), that is believed not to be involved in catalysis. Complex I functions in the transfer of electrons from NADH to the respiratory chain. The immediate electron acceptor for the enzyme is believed to be ubiquinone. This is NADH dehydrogenase [ubiquinone] 1 subunit C2, isoform 2 (NDUFC2-KCTD14) from Homo sapiens (Human).